The primary structure comprises 1575 residues: Ovochymase (1575 aa).

Residues 1 to 19 (MIVTFVALALSCCTPQVTA) form the signal peptide. The Peptidase S1 1 domain maps to 36–280 (IVGGEMAKLG…YSSWIANYTQ (245 aa)). The cysteines at positions 61 and 77 are disulfide-linked. Active-site charge relay system residues include H76 and D132. Intrachain disulfides connect C166–C233, C199–C212, and C223–C256. S227 functions as the Charge relay system in the catalytic mechanism. N-linked (GlcNAc...) asparagine glycosylation is found at N277 and N303. 4 disulfides stabilise this stretch: C300–C330, C358–C386, C432–C460, and C486–C507. CUB domains lie at 300-423 (CSSN…FHAV) and 432-545 (CGGI…YYFS). N-linked (GlcNAc...) asparagine glycans are attached at residues N497, N513, and N549. Residues 575-810 (IVNGDIAIAG…YIDWIIATAN (236 aa)) form the Peptidase S1 2 domain. The cysteines at positions 602 and 618 are disulfide-linked. Catalysis depends on charge relay system residues H617 and D665. 3 disulfide bridges follow: C700/C766, C730/C745, and C756/C786. N748 carries an N-linked (GlcNAc...) asparagine glycan. S760 acts as the Charge relay system in catalysis. N810 carries N-linked (GlcNAc...) asparagine glycosylation. 7 disulfide bridges follow: C830–C859, C889–C913, C956–C984, C1012–C1034, C1080–C1108, C1135–C1158, and C1221–C1246. 4 consecutive CUB domains span residues 830–949 (CIQL…YRLE), 956–1070 (CGQL…FVEL), 1080–1197 (CGGV…YTAV), and 1221–1341 (CQDS…YKLM). N-linked (GlcNAc...) asparagine glycans are attached at residues N968, N1027, N1087, and N1090. N1273 is a glycosylation site (N-linked (GlcNAc...) asparagine). The region spanning 1314–1575 (YNGGEISMLF…FLKWITKIIQ (262 aa)) is the Peptidase S1 3 domain. 2 disulfide bridges follow: C1376–C1392 and C1493–C1507. N1511 is a glycosylation site (N-linked (GlcNAc...) asparagine).

This sequence belongs to the peptidase S1 family. As to expression, expressed in the testis and ovary. Expressed in the gonads and gametes. Expressed in the follicle cells covering the vitelline coat of ovarian egg.

The protein resides in the secreted. May be responsible for elevation of the vitelline coat at the late developmental stage of oogenesis and during fertilization in ovarian eggs. The polypeptide is Ovochymase (Halocynthia roretzi (Sea squirt)).